The chain runs to 328 residues: 4-hydroxythreonine-4-phosphate dehydrogenase (328 aa).

Residues His135 and Thr136 each contribute to the substrate site. 3 residues coordinate a divalent metal cation: His165, His210, and His265. Lys273, Asn282, and Arg291 together coordinate substrate.

The protein belongs to the PdxA family. As to quaternary structure, homodimer. Requires Zn(2+) as cofactor. It depends on Mg(2+) as a cofactor. Co(2+) is required as a cofactor.

It localises to the cytoplasm. The enzyme catalyses 4-(phosphooxy)-L-threonine + NAD(+) = 3-amino-2-oxopropyl phosphate + CO2 + NADH. The protein operates within cofactor biosynthesis; pyridoxine 5'-phosphate biosynthesis; pyridoxine 5'-phosphate from D-erythrose 4-phosphate: step 4/5. In terms of biological role, catalyzes the NAD(P)-dependent oxidation of 4-(phosphooxy)-L-threonine (HTP) into 2-amino-3-oxo-4-(phosphooxy)butyric acid which spontaneously decarboxylates to form 3-amino-2-oxopropyl phosphate (AHAP). The sequence is that of 4-hydroxythreonine-4-phosphate dehydrogenase from Enterobacter sp. (strain 638).